The following is a 171-amino-acid chain: Small ribosomal subunit protein uS13 (171 aa).

Disordered regions lie at residues 1–22 and 142–171; these read MGKA…AAKK and RHEK…RKKE. A compositionally biased stretch (basic and acidic residues) spans 10 to 22; that stretch reads KSDKEAAKPAAKK. Residues 142-158 show a composition bias toward basic residues; the sequence is RHEKGKKVRGQRTRSNG.

Belongs to the universal ribosomal protein uS13 family. As to quaternary structure, part of the 30S ribosomal subunit. Forms a loose heterodimer with protein S19. Forms two bridges to the 50S subunit in the 70S ribosome.

In terms of biological role, located at the top of the head of the 30S subunit, it contacts several helices of the 16S rRNA. In the 70S ribosome it contacts the 23S rRNA (bridge B1a) and protein L5 of the 50S subunit (bridge B1b), connecting the 2 subunits; these bridges are implicated in subunit movement. The protein is Small ribosomal subunit protein uS13 of Thermoplasma volcanium (strain ATCC 51530 / DSM 4299 / JCM 9571 / NBRC 15438 / GSS1).